Reading from the N-terminus, the 304-residue chain is DCN1-like protein 3 (304 aa).

Disordered stretches follow at residues 1 to 87 and 284 to 304; these read MGQC…EESS and EVEG…EEQT. Gly-2 carries N-myristoyl glycine lipidation. Positions 86-278 constitute a DCUN1 domain; that stretch reads SSLQRLEELF…LFDTFVEWEM (193 aa).

Part of a complex containing DCUN1D3, CUL3 and RBX1. Interacts (via the DCUN1 domain) with the unneddylated cullins: interacts with CUL1, CUL2, CUL3, CUL4A, CUL4B and CUL5; these interactions promote the cullin neddylation and the identity of the cullin dictates the affinity of the interaction. Interacts preferentially with CUL3; this interaction triggers the relocalization of CUL3 to the cell membrane where CUL3 is neddylated. Interacts (via DCUN1 domain) with RBX1. May also interact with regulators or subunits of cullin-RING ligases such as RNF7, ELOB and DDB1; these interactions are bridged by cullins. Interacts (via DCUN1 domain) with CAND1; this interaction is bridged by cullins and strongly inhibits cullin neddylation. These CAND-cullin-DCNL complexes can only be neddylated in the presence of a substrate adapter. Interacts (via DCUN1 domain) with the N-terminally acetylated form of UBE2M and UBE2F. As to expression, highest levels of expression are in the testis. Very low levels of expression in the heart, brain, skeletal muscle, kidney, liver, spleen, lung and ovary.

It localises to the cell membrane. It is found in the cytoplasm. Its subcellular location is the nucleus. The protein localises to the perinuclear region. In terms of biological role, contributes to the neddylation of all cullins by transferring NEDD8 from N-terminally acetylated NEDD8-conjugating E2s enzyme to different cullin C-terminal domain-RBX complexes and may play a role in the cell cycle progression by regulating the SCF ubiquitin E3 ligase complex, after UV damage. At the cell membrane, can promote and as well inhibit cullins neddylation. This is DCN1-like protein 3 from Mus musculus (Mouse).